We begin with the raw amino-acid sequence, 415 residues long: Polyadenylate-binding protein RBP45C (415 aa).

A disordered region spans residues methionine 1–glycine 77. The span at glutamine 23–glutamine 64 shows a compositional bias: low complexity. 3 consecutive RRM domains span residues arginine 80–leucine 160, histidine 173–asparagine 252, and threonine 278–serine 350. The span at arginine 344–threonine 356 shows a compositional bias: polar residues. The disordered stretch occupies residues arginine 344 to tyrosine 369.

It belongs to the polyadenylate-binding RBP45 family. Interacts with the poly(A) tail of mRNA in nucleus. As to expression, mostly expressed in seedlings and stems, and, to a lower extent, in leaves and flowers.

The protein localises to the nucleus. Heterogeneous nuclear ribonucleoprotein (hnRNP)-protein binding the poly(A) tail of mRNA and probably involved in some steps of pre-mRNA maturation. The sequence is that of Polyadenylate-binding protein RBP45C (RBP45C) from Arabidopsis thaliana (Mouse-ear cress).